Reading from the N-terminus, the 473-residue chain is Photosystem II CP43 reaction center protein (473 aa).

Residues 1–14 (MKILYSPRRFYPVE) constitute a propeptide that is removed on maturation. The residue at position 15 (threonine 15) is an N-acetylthreonine. Residue threonine 15 is modified to Phosphothreonine. 5 helical membrane passes run 69–93 (LFEV…PHLA), 134–155 (LIGP…KDKN), 178–200 (KALY…REIT), 255–275 (KPFA…LSYS), and 291–312 (WFNN…ASQA). Glutamate 367 is a [CaMn4O5] cluster binding site. A helical membrane pass occupies residues 447–471 (RARAAAAGFEKGIDRDTEPVLSMTP).

The protein belongs to the PsbB/PsbC family. PsbC subfamily. In terms of assembly, PSII is composed of 1 copy each of membrane proteins PsbA, PsbB, PsbC, PsbD, PsbE, PsbF, PsbH, PsbI, PsbJ, PsbK, PsbL, PsbM, PsbT, PsbX, PsbY, PsbZ, Psb30/Ycf12, at least 3 peripheral proteins of the oxygen-evolving complex and a large number of cofactors. It forms dimeric complexes. The cofactor is Binds multiple chlorophylls and provides some of the ligands for the Ca-4Mn-5O cluster of the oxygen-evolving complex. It may also provide a ligand for a Cl- that is required for oxygen evolution. PSII binds additional chlorophylls, carotenoids and specific lipids..

It localises to the plastid. The protein localises to the chloroplast thylakoid membrane. Functionally, one of the components of the core complex of photosystem II (PSII). It binds chlorophyll and helps catalyze the primary light-induced photochemical processes of PSII. PSII is a light-driven water:plastoquinone oxidoreductase, using light energy to abstract electrons from H(2)O, generating O(2) and a proton gradient subsequently used for ATP formation. The sequence is that of Photosystem II CP43 reaction center protein from Adiantum capillus-veneris (Maidenhair fern).